Consider the following 483-residue polypeptide: Glycogen synthase (483 aa).

Residue Lys-18 participates in ADP-alpha-D-glucose binding.

This sequence belongs to the glycosyltransferase 1 family. Bacterial/plant glycogen synthase subfamily.

It carries out the reaction [(1-&gt;4)-alpha-D-glucosyl](n) + ADP-alpha-D-glucose = [(1-&gt;4)-alpha-D-glucosyl](n+1) + ADP + H(+). The protein operates within glycan biosynthesis; glycogen biosynthesis. In terms of biological role, synthesizes alpha-1,4-glucan chains using ADP-glucose. In Rhodopseudomonas palustris (strain TIE-1), this protein is Glycogen synthase.